The sequence spans 417 residues: Gamma-glutamyl phosphate reductase (417 aa).

It belongs to the gamma-glutamyl phosphate reductase family.

It is found in the cytoplasm. It catalyses the reaction L-glutamate 5-semialdehyde + phosphate + NADP(+) = L-glutamyl 5-phosphate + NADPH + H(+). Its pathway is amino-acid biosynthesis; L-proline biosynthesis; L-glutamate 5-semialdehyde from L-glutamate: step 2/2. Its function is as follows. Catalyzes the NADPH-dependent reduction of L-glutamate 5-phosphate into L-glutamate 5-semialdehyde and phosphate. The product spontaneously undergoes cyclization to form 1-pyrroline-5-carboxylate. The polypeptide is Gamma-glutamyl phosphate reductase (Legionella pneumophila (strain Paris)).